A 319-amino-acid chain; its full sequence is 4-diphosphocytidyl-2-C-methyl-D-erythritol kinase (319 aa).

Residue lysine 18 is part of the active site. 103–113 lines the ATP pocket; the sequence is PIGAGLAGGST. The active site involves aspartate 145.

The protein belongs to the GHMP kinase family. IspE subfamily.

It carries out the reaction 4-CDP-2-C-methyl-D-erythritol + ATP = 4-CDP-2-C-methyl-D-erythritol 2-phosphate + ADP + H(+). The protein operates within isoprenoid biosynthesis; isopentenyl diphosphate biosynthesis via DXP pathway; isopentenyl diphosphate from 1-deoxy-D-xylulose 5-phosphate: step 3/6. Functionally, catalyzes the phosphorylation of the position 2 hydroxy group of 4-diphosphocytidyl-2C-methyl-D-erythritol. The sequence is that of 4-diphosphocytidyl-2-C-methyl-D-erythritol kinase from Prochlorococcus marinus (strain NATL1A).